We begin with the raw amino-acid sequence, 426 residues long: Bile acid CoA-transferase BaiF (426 aa).

Residue Asp168 is the Nucleophile of the active site.

This sequence belongs to the CoA-transferase III family.

It catalyses the reaction lithocholoyl-CoA + cholate = choloyl-CoA + lithocholate. It carries out the reaction deoxycholoyl-CoA + cholate = choloyl-CoA + deoxycholate. The enzyme catalyses allodeoxycholoyl-CoA + cholate = allodeoxycholate + choloyl-CoA. The catalysed reaction is allocholate + deoxycholoyl-CoA = allocholoyl-CoA + deoxycholate. It catalyses the reaction allocholate + lithocholoyl-CoA = allocholoyl-CoA + lithocholate. It carries out the reaction allocholate + allodeoxycholoyl-CoA = allocholoyl-CoA + allodeoxycholate. The enzyme catalyses lithocholoyl-CoA + chenodeoxycholate = chenodeoxycholoyl-CoA + lithocholate. The catalysed reaction is ursodeoxycholate + deoxycholoyl-CoA = ursodeoxycholoyl-CoA + deoxycholate. It catalyses the reaction ursodeoxycholate + lithocholoyl-CoA = ursodeoxycholoyl-CoA + lithocholate. It carries out the reaction allodeoxycholoyl-CoA + ursodeoxycholate = ursodeoxycholoyl-CoA + allodeoxycholate. The enzyme catalyses beta-muricholate + lithocholoyl-CoA = beta-muricholoyl-CoA + lithocholate. The catalysed reaction is beta-muricholate + deoxycholoyl-CoA = beta-muricholoyl-CoA + deoxycholate. It catalyses the reaction beta-muricholate + allodeoxycholoyl-CoA = beta-muricholoyl-CoA + allodeoxycholate. It carries out the reaction choloyl-CoA + H2O = cholate + CoA + H(+). The enzyme catalyses chenodeoxycholoyl-CoA + H2O = chenodeoxycholate + CoA + H(+). The protein operates within lipid metabolism; bile acid biosynthesis. In terms of biological role, functions in the bile acid 7alpha-dehydroxylation pathway, which forms secondary bile acids via the 7alpha-dehydroxylation of primary bile acids, and is carried out by intestinal anaerobic bacteria. Acts as a bile acid CoA transferase with broad bile acid substrate specificity. Catalyzes the transfer of the CoA moiety of secondary bile acid-CoA compounds to primary bile acids. Can use lithocholoyl-CoA, deoxycholoyl-CoA and allodeoxycholoyl-CoA as bile acid CoA donors and cholate, allocholate, chenodeoxycholate, ursodeoxycholate, and beta-muricholate as bile acid CoA acceptors. Also displays CoA hydrolase activity, being able to catalyze the hydrolysis of choloyl-CoA, 3-dehydrocholoyl-CoA, and chenodeoxycholoyl-CoA, releasing CoA and the corresponding free bile acid. However, this latter activity may not represent the actual activity of this enzyme, since using a transferase rather than hydrolase, the bacteria conserve the thioester bond energy, saving ATP molecules. Shows no hydrolytic activity with acetyl-CoA, isovaleryl-CoA, palmitoyl-CoA, or phenylacetyl-CoA as substrates. The protein is Bile acid CoA-transferase BaiF of Clostridium scindens (strain JCM 10418 / VPI 12708).